A 60-amino-acid polypeptide reads, in one-letter code: Large ribosomal subunit protein uL30 (60 aa).

It belongs to the universal ribosomal protein uL30 family. In terms of assembly, part of the 50S ribosomal subunit.

This is Large ribosomal subunit protein uL30 from Shewanella loihica (strain ATCC BAA-1088 / PV-4).